A 477-amino-acid polypeptide reads, in one-letter code: Endo-1,4-beta-xylanase A (477 aa).

A signal peptide spans 1-41 (MGSYALPRSGVRRSIRVLLLALVVGVLGTATALIAPPGAHA). The 299-residue stretch at 42 to 340 (AESTLGAAAA…KAAYTAVLDA (299 aa)) folds into the GH10 domain. The Proton donor role is filled by glutamate 169. The active-site Nucleophile is glutamate 277. The region spanning 361–477 (SGRCLDVPDA…NGSNQRWTRT (117 aa)) is the Ricin B-type lectin domain. Disulfide bonds link cysteine 364-cysteine 383, cysteine 406-cysteine 423, and cysteine 447-cysteine 466.

Belongs to the glycosyl hydrolase 10 (cellulase F) family.

The protein localises to the secreted. It carries out the reaction Endohydrolysis of (1-&gt;4)-beta-D-xylosidic linkages in xylans.. Its pathway is glycan degradation; xylan degradation. Contributes to hydrolyze hemicellulose, the major component of plant cell-walls. XLNA and XLNB seem to act sequentially on the substrate to yield xylobiose and xylose as carbon sources. The protein is Endo-1,4-beta-xylanase A (xlnA) of Streptomyces lividans.